The following is a 415-amino-acid chain: MPETPITMPAWLQRGMVDLFPSGQWGDADQQLATRLDEAREQNRPLRVKLGIDPTGRDIHLGHSILFRKLRAFQDAGHTAVLIIGDFTARIGDPTGKSSTRVQLTSEQIEANATTYLAQLGQGQSAEKALLDFTTPGRLEVRRNTEWLADLDLPEVIGLLGTATVGQMLAKEDFGNRYGSGVPIALHEFLYPLLQGYDSVAVQADVELGGTDQKFNVAMGRDLQRHFDQRPQFGLLLPILAGLDGVQKMSKSLSNTVGLNEDPLSMYSKLEKVPDALVSSYVVLLTDLDPEALPVNPRERQKAMAIAVTASRHGIAAAEAAQNDAARLVSGSQDDAASVPEAFLSDVNFPAKAFYLLSAIGLCASSSEARRQIKGGAVRLDGEKITDPNLEFTDSSLLMGKVLQVGKKTFRRLTR.

Positions 54 to 63 (PTGRDIHLGH) match the 'HIGH' region motif. Residues 248–252 (KMSKS) carry the 'KMSKS' region motif. Residue Lys251 coordinates ATP. In terms of domain architecture, S4 RNA-binding spans 351–415 (AKAFYLLSAI…GKKTFRRLTR (65 aa)).

This sequence belongs to the class-I aminoacyl-tRNA synthetase family. TyrS type 2 subfamily. Homodimer.

The protein localises to the cytoplasm. The catalysed reaction is tRNA(Tyr) + L-tyrosine + ATP = L-tyrosyl-tRNA(Tyr) + AMP + diphosphate + H(+). Its function is as follows. Catalyzes the attachment of tyrosine to tRNA(Tyr) in a two-step reaction: tyrosine is first activated by ATP to form Tyr-AMP and then transferred to the acceptor end of tRNA(Tyr). This chain is Tyrosine--tRNA ligase, found in Prochlorococcus marinus (strain MIT 9313).